The sequence spans 472 residues: Uronate isomerase (472 aa).

This sequence belongs to the metallo-dependent hydrolases superfamily. Uronate isomerase family.

It catalyses the reaction D-glucuronate = D-fructuronate. The catalysed reaction is aldehydo-D-galacturonate = keto-D-tagaturonate. It functions in the pathway carbohydrate metabolism; pentose and glucuronate interconversion. This chain is Uronate isomerase, found in Xanthomonas axonopodis pv. citri (strain 306).